A 602-amino-acid chain; its full sequence is uncharacterized protein (602 aa).

3 N-linked (GlcNAc...) asparagine glycosylation sites follow: Asn305, Asn497, and Asn577.

N-glycosylated.

Its subcellular location is the vacuole. This is an uncharacterized protein from Saccharomyces cerevisiae (strain ATCC 204508 / S288c) (Baker's yeast).